We begin with the raw amino-acid sequence, 89 residues long: Small ribosomal subunit protein uS14A (89 aa).

Belongs to the universal ribosomal protein uS14 family. As to quaternary structure, part of the 30S ribosomal subunit. Contacts proteins S3 and S10.

Functionally, binds 16S rRNA, required for the assembly of 30S particles and may also be responsible for determining the conformation of the 16S rRNA at the A site. The polypeptide is Small ribosomal subunit protein uS14A (Bacillus pumilus (strain SAFR-032)).